Consider the following 433-residue polypeptide: Putative zinc metalloprotease BB_0118 (433 aa).

Position 17 (His-17) interacts with Zn(2+). Residue Glu-18 is part of the active site. His-21 is a Zn(2+) binding site. The chain crosses the membrane as a helical span at residues 98–120 (ILIYFAGPLFNLIFSFIVFIFIS). The 73-residue stretch at 193–265 (TVSLQDFLKE…VVEIKFSRNG (73 aa)) folds into the PDZ domain. 3 consecutive transmembrane segments (helical) span residues 334–356 (VSGP…LYWI), 366–388 (LAGM…FISF), and 401–423 (TIYS…GLFN).

The protein belongs to the peptidase M50B family. Requires Zn(2+) as cofactor.

The protein resides in the cell inner membrane. The protein is Putative zinc metalloprotease BB_0118 of Borreliella burgdorferi (strain ATCC 35210 / DSM 4680 / CIP 102532 / B31) (Borrelia burgdorferi).